The following is an 83-amino-acid chain: MNKAPINLQDTFLNQVRKENMPVTIYLVNGFQLKGLVRGFDNFTVVIEFEGKQQMVYKHAISTVMPLRPINLVAASQASAEER.

Residues 10–70 (DTFLNQVRKE…ISTVMPLRPI (61 aa)) form the Sm domain.

This sequence belongs to the Hfq family. In terms of assembly, homohexamer.

In terms of biological role, RNA chaperone that binds small regulatory RNA (sRNAs) and mRNAs to facilitate mRNA translational regulation in response to envelope stress, environmental stress and changes in metabolite concentrations. Also binds with high specificity to tRNAs. This chain is RNA-binding protein Hfq, found in Desulfitobacterium hafniense (strain Y51).